Reading from the N-terminus, the 102-residue chain is Small ribosomal subunit protein uS10 (102 aa).

It belongs to the universal ribosomal protein uS10 family. As to quaternary structure, part of the 30S ribosomal subunit.

Functionally, involved in the binding of tRNA to the ribosomes. The chain is Small ribosomal subunit protein uS10 from Bifidobacterium longum subsp. infantis (strain ATCC 15697 / DSM 20088 / JCM 1222 / NCTC 11817 / S12).